The following is a 614-amino-acid chain: Laccase 1 (614 aa).

The first 21 residues, 1–21, serve as a signal peptide directing secretion; the sequence is MSRFARLLLMVVALFFTNAWA. Plastocyanin-like domains lie at 30-143 and 172-360; these read ITWK…IRPK and YLVV…MRIP. A glycan (N-linked (GlcNAc...) asparagine) is linked at Asn-75. His-79, His-81, His-123, and His-125 together coordinate Cu cation. Residues Asn-257, Asn-280, Asn-445, Asn-469, and Asn-485 are each glycosylated (N-linked (GlcNAc...) asparagine). Residues 469–599 form the Plastocyanin-like 3 domain; it reads NATRDTENDG…GGMGIAILDG (131 aa). Residues His-507, His-510, and His-512 each contribute to the Cu cation site. N-linked (GlcNAc...) asparagine glycosylation occurs at Asn-527. Cu cation is bound by residues His-581, Cys-582, His-583, and His-587.

Belongs to the multicopper oxidase family. Cu cation is required as a cofactor.

Its subcellular location is the cell surface. It functions in the pathway pigment biosynthesis. In terms of biological role, laccase; part of the Pks1 gene cluster that mediates the biosynthesis of an anthraquinone derivative pigment that contributes to conidial pigmentation that provides protection from UV radiation, heat and cold stress. The polyketide synthase Pks1 produces 1-acetyl-2,4,6,8-tetrahydroxy-9,10-anthraquinone though condensation of acetyl-CoA with malonyl-CoA. The dehydratase EthD and the laccase Mlac1 further convert the anthraquinone derivative into the final conidial pigment. In Metarhizium majus (strain ARSEF 297), this protein is Laccase 1.